The primary structure comprises 247 residues: Proteasome subunit alpha type-7-1 (247 aa).

This sequence belongs to the peptidase T1A family. As to quaternary structure, the 26S proteasome consists of a 20S proteasome core and two 19S regulatory subunits. The 20S proteasome core is composed of 28 subunits that are arranged in four stacked rings, resulting in a barrel-shaped structure. The two end rings are each formed by seven alpha subunits, and the two central rings are each formed by seven beta subunits. The catalytic chamber with the active sites is on the inside of the barrel.

The protein localises to the cytoplasm. It is found in the nucleus. Its function is as follows. The proteasome is a multicatalytic proteinase complex which is characterized by its ability to cleave peptides with Arg, Phe, Tyr, Leu, and Glu adjacent to the leaving group at neutral or slightly basic pH. The proteasome has an ATP-dependent proteolytic activity. The polypeptide is Proteasome subunit alpha type-7-1 (Pros28.1) (Drosophila virilis (Fruit fly)).